The sequence spans 254 residues: Flavin-dependent thymidylate synthase (254 aa).

Residues 7–237 enclose the ThyX domain; sequence LRVQLIARTE…PAVFADFEIY (231 aa). FAD is bound by residues Ser-71, 95–97, and Gln-103; that span reads RHR. Residues 92-95, 103-107, and Arg-176 each bind dUMP; these read ELIR and QLSQR. Residues 95 to 105 carry the ThyX motif motif; that stretch reads RHRHFSYSQLS. Residues 192 to 194 and His-198 contribute to the FAD site; that span reads NYR. Residue Arg-203 coordinates dUMP. Arg-203 (involved in ionization of N3 of dUMP, leading to its activation) is an active-site residue.

The protein belongs to the thymidylate synthase ThyX family. In terms of assembly, homotetramer. It depends on FAD as a cofactor.

The catalysed reaction is dUMP + (6R)-5,10-methylene-5,6,7,8-tetrahydrofolate + NADPH + H(+) = dTMP + (6S)-5,6,7,8-tetrahydrofolate + NADP(+). It participates in pyrimidine metabolism; dTTP biosynthesis. Its function is as follows. Catalyzes the reductive methylation of 2'-deoxyuridine-5'-monophosphate (dUMP) to 2'-deoxythymidine-5'-monophosphate (dTMP) while utilizing 5,10-methylenetetrahydrofolate (mTHF) as the methyl donor, and NADPH and FADH(2) as the reductant. The sequence is that of Flavin-dependent thymidylate synthase from Mycobacterium sp. (strain KMS).